The chain runs to 751 residues: Diamine oxidase [copper-containing] (751 aa).

The signal sequence occupies residues 1-22; that stretch reads MSLAFGWAAVILLLQTADTASA. Residues Asn-61 and Asn-110 are each glycosylated (N-linked (GlcNAc...) asparagine). The active-site Proton acceptor is the Asp-373. Cys-391 and Cys-417 form a disulfide bridge. Tyr-461 serves as the catalytic Schiff-base intermediate with substrate; via topaquinone. Position 461 is a 2',4',5'-topaquinone (Tyr-461). Cu(2+)-binding residues include His-510 and His-512. The Ca(2+) site is built by Asp-519, Leu-520, and Asp-521. Residue Asn-538 is glycosylated (N-linked (GlcNAc...) asparagine). Ca(2+) is bound by residues Glu-562, Phe-653, Asn-656, Glu-658, Asp-664, and Leu-665. Cu(2+) is bound at residue His-675. Residue Asn-745 is glycosylated (N-linked (GlcNAc...) asparagine).

The protein belongs to the copper/topaquinone oxidase family. In terms of assembly, homodimer; disulfide-linked. The cofactor is Cu(2+). Ca(2+) is required as a cofactor. Requires L-topaquinone as cofactor. Topaquinone (TPQ) is generated by copper-dependent autoxidation of a specific tyrosyl residue. In terms of processing, N-glycosylated.

Its subcellular location is the secreted. The protein localises to the extracellular space. It is found in the cell membrane. The enzyme catalyses histamine + O2 + H2O = imidazole-4-acetaldehyde + H2O2 + NH4(+). It catalyses the reaction N(tau)-methylhistamine + O2 + H2O = 1-methylimidazole-4-acetaldehyde + H2O2 + NH4(+). It carries out the reaction putrescine + O2 + H2O = 4-aminobutanal + H2O2 + NH4(+). The catalysed reaction is cadaverine + O2 + H2O = 5-aminopentanal + H2O2 + NH4(+). With respect to regulation, inhibited by amiloride and amiloride analogs. Its function is as follows. Catalyzes the oxidative deamination of primary amines to the corresponding aldehydes with the concomitant production of hydrogen peroxide and ammonia. Its preferred substrates in vitro are the diamines histamine and 1-methylhistamine and it could therefore play a role in allergic and immune responses. Has a broad specificity for diamines and can also act on cadaverine and putrescine, two products of amino acid catabolism. It could also act on polyamines, like spermidine and spermine though less efficiently, and regulate various biological processes. In Mus musculus (Mouse), this protein is Diamine oxidase [copper-containing].